Reading from the N-terminus, the 1017-residue chain is GPI ethanolamine phosphate transferase 3 (1017 aa).

A helical transmembrane segment spans residues 34 to 54 (FYIILLVFIAILQFISIAFFT). Residues Asn66, Asn71, Asn100, Asn182, and Asn203 are each glycosylated (N-linked (GlcNAc...) asparagine). Residues 347–367 (VSSLALLMGQPIPFNNLGWPI) traverse the membrane as a helical segment. An N-linked (GlcNAc...) asparagine glycan is attached at Asn411. The next 6 helical transmembrane spans lie at 457 to 477 (LLAT…SIVV), 484 to 504 (FVPG…GIFY), 515 to 535 (FWGT…ITIF), 558 to 578 (IAVM…FTIW), 582 to 602 (IVAF…VFLP), and 644 to 664 (LGGY…MITI). 2 N-linked (GlcNAc...) asparagine glycosylation sites follow: Asn681 and Asn682. A helical transmembrane segment spans residues 685 to 705 (WWVLGLCFLMIFILPACITGY). Asn707 is a glycosylation site (N-linked (GlcNAc...) asparagine). The helical transmembrane segment at 715 to 735 (AAPIWINVFLKGILGLNFVYW) threads the bilayer. An N-linked (GlcNAc...) asparagine glycan is attached at Asn742. 6 helical membrane passes run 765–785 (IIAG…PLCI), 806–826 (NIYG…ILLF), 829–849 (PLAQ…LEII), 903–923 (IAII…VALL), 947–967 (GILL…VTHF), and 981–1001 (FIFA…GTIA).

Belongs to the PIGG/PIGN/PIGO family. PIGO subfamily. In terms of processing, glycosylated.

It is found in the endoplasmic reticulum membrane. Its pathway is glycolipid biosynthesis; glycosylphosphatidylinositol-anchor biosynthesis. In terms of biological role, involved in glycosylphosphatidylinositol-anchor biosynthesis. Transfers ethanolamine phosphate to the GPI third mannose which links the GPI-anchor to the C-terminus of the proteins by an amide bond. Involved in cell wall biosynthesis. This chain is GPI ethanolamine phosphate transferase 3 (GPI13), found in Saccharomyces cerevisiae (strain ATCC 204508 / S288c) (Baker's yeast).